Consider the following 319-residue polypeptide: Mas-related G-protein coupled receptor member D (319 aa).

At 1 to 30 the chain is on the extracellular side; it reads MNYTPYSSPAPGLTISPTMDPVTWVYFSVT. A helical transmembrane segment spans residues 31-51; sequence FLAMATCVCGIVGNSMVIWLL. The Cytoplasmic segment spans residues 52–64; it reads SFHRVQRSPFCTY. Residues 65–85 traverse the membrane as a helical segment; it reads VLNLAVADLLFLLCMASLLSL. Residues 86–92 lie on the Extracellular side of the membrane; that stretch reads ETGPLLT. Residues 93 to 113 form a helical membrane-spanning segment; sequence ASTSARVYEGMKRIKYFAYTA. The Cytoplasmic segment spans residues 114 to 144; the sequence is GLSLLTAISTQRCLSVLFPIWYKCHRPQHLS. The chain crosses the membrane as a helical span at residues 145–165; it reads GVVCGVLWALALLMNFLASFF. Topologically, residues 166 to 184 are extracellular; that stretch reads CVQFWHPDKYQCFKVDMVF. Residues 185–205 traverse the membrane as a helical segment; that stretch reads NSLILGIFMPVMVLTSAIIFI. Over 206-220 the chain is Cytoplasmic; sequence RMRKNSLLQRRQPRR. A helical membrane pass occupies residues 221–241; the sequence is LYVVILTSVLVFLTCSLPLGI. The Extracellular portion of the chain corresponds to 242-260; the sequence is NWFLLYWVELPQAVRLLYV. The chain crosses the membrane as a helical span at residues 261–281; it reads CSSRFSSSLSSSANPVIYFLV. Residues 282–319 lie on the Cytoplasmic side of the membrane; the sequence is GSQKSHRLQESLGAVLGRALQDEPEGRETPSTCTNDGV.

This sequence belongs to the G-protein coupled receptor 1 family. Mas subfamily. In terms of tissue distribution, co-expressed in the small diameter neurons with P2X3 and VR1 in dorsal root ganglia.

The protein localises to the cell membrane. In terms of biological role, may regulate nociceptor function and/or development, including the sensation or modulation of pain. Functions as a specific membrane receptor for beta-alanine. The receptor couples with G-protein G(q) and G(i). In Rattus norvegicus (Rat), this protein is Mas-related G-protein coupled receptor member D (Mrgprd).